Reading from the N-terminus, the 210-residue chain is MKEVAVYQIPVLSPSGRRELAADLPAEINPHLLWEVVRWQLAKRRRGTASTKTRGEVAYSGRKIWPQKHTGRARHGDIGAPIFVGGGVVFGPKPRDYSYTLPKKVRKKGLAMAVADRAREGKLLLVEAFAGVNGKTKEFLAWAKEAGLDGSESVLLVTGNELVRRAARNLPWVVTLAPEGLNVYDIVRTERLVMDLDAWEVFQNRIGGEA.

As to quaternary structure, part of the 50S ribosomal subunit. The N-terminus is blocked.

In terms of biological role, one of the primary rRNA binding proteins, this protein initially binds near the 5'-end of the 23S rRNA. It is important during the early stages of 50S assembly. It makes multiple contacts with different domains of the 23S rRNA in the assembled 50S subunit and ribosome. Forms part of the polypeptide exit tunnel. Functionally, this protein can be incorporated into E.coli ribosomes in vivo, which resulted in decreased peptidyltransferase (Ptase) activity of the hybrid ribosomes. The hybrid 50S subunits associate less well with 30S subunits to form the ribosome. This Thermus thermophilus (strain ATCC 27634 / DSM 579 / HB8) protein is Large ribosomal subunit protein uL4 (rplD).